The chain runs to 347 residues: Transcription termination/antitermination protein NusA (347 aa).

One can recognise an S1 motif domain in the interval 112 to 184 (GEIVAGVIQR…REPLITLSRT (73 aa)). The 61-residue stretch at 287 to 347 (ARAARVVVPD…GVSRGMAHDR (61 aa)) folds into the KH domain. A disordered region spans residues 322–347 (DIRGDAPPPPPGQPEPGVSRGMAHDR).

Belongs to the NusA family. In terms of assembly, monomer. Binds directly to the core enzyme of the DNA-dependent RNA polymerase and to nascent RNA.

The protein localises to the cytoplasm. Functionally, participates in both transcription termination and antitermination. This is Transcription termination/antitermination protein NusA from Mycobacterium bovis (strain ATCC BAA-935 / AF2122/97).